Reading from the N-terminus, the 1294-residue chain is CLIP-associating protein 2 (1294 aa).

A disordered region spans residues 1–61 (MAMGDDKSFD…KVGGASKEGG (61 aa)). Phosphoserine occurs at positions 8 and 14. The segment covering 47-61 (SAGGPKVGGASKEGG) has biased composition (gly residues). Residues 60-311 (GGAGAVDEDD…KSLQTYLKSS (252 aa)) are TOG 1. HEAT repeat units lie at residues 173–208 (HGAE…IRHT), 209–245 (HVPR…EWQT), and 250–287 (RHAA…HFPG). Residues 314–368 (VASLPQSDRSSSSSQESLNRPFSSKWSTANPSTVAGRVSAGSSKASSLPGSLQRS) are disordered. Ser316, Ser327, and Ser330 each carry phosphoserine. Over residues 316–334 (SLPQSDRSSSSSQESLNRP) the composition is skewed to low complexity. Composition is skewed to polar residues over residues 335-346 (FSSKWSTANPST) and 353-367 (AGSS…SLQR). A phosphoserine mark is found at Ser360, Ser368, Ser370, and Ser407. Residues 409–467 (EDTSDKLDGTASEDGRVRAKLSAPLAGMGNAKADSRGRSRTKMVSQSQPGSRSGSPGRV) are disordered. A compositionally biased stretch (basic and acidic residues) spans 411–425 (TSDKLDGTASEDGRV). The tract at residues 444–580 (RGRSRTKMVS…GPGYGISQSS (137 aa)) is interaction with microtubules, MAPRE1 and MAPRE3. Over residues 453–467 (SQSQPGSRSGSPGRV) the composition is skewed to low complexity. Phosphoserine is present on residues Ser455, Ser459, Ser463, Ser478, and Ser489. Residues 488 to 557 (ASAQKRSKIP…PLASRHHSRS (70 aa)) form a disordered region. The SXIP motif 1; mediates interaction with MAPRE1 and targeting to microtubule plus ends signature appears at 494–497 (SKIP). Ser507 is subject to Phosphoserine. The SXIP motif 2; mediates interaction with MAPRE1 and targeting to microtubule plus ends signature appears at 517–520 (SRIP). Ser525, Ser529, Ser585, Ser587, Ser596, Ser621, and Ser627 each carry phosphoserine. Residues 617 to 645 (YGMHSDDDANSDASSACSERSYSSRNGSI) are disordered. A compositionally biased stretch (low complexity) spans 627 to 641 (SDASSACSERSYSSR). The tract at residues 649–881 (MRQTEDVAEV…TKLLHNHLRN (233 aa)) is TOG 2. HEAT repeat units follow at residues 710 to 747 (RVFS…KMGA) and 772 to 809 (LQFN…QMDP). Thr787 carries the post-translational modification Phosphothreonine. The interaction with RSN and localization to the Golgi and kinetochores stretch occupies residues 872-1294 (TKLLHNHLRN…DPTTDVSGQS (423 aa)). Disordered regions lie at residues 878–928 (HLRN…FDYD) and 952–995 (SFRS…DSSQ). Polar residues-rich tracts occupy residues 880-892 (RNTG…SMGS) and 901-922 (SPAN…TLSP). Ser892 is subject to Phosphoserine. Residues Ser952, Ser955, Ser1013, and Ser1029 each carry the phosphoserine modification. Basic and acidic residues predominate over residues 955-972 (SQEDMNEPLKRDSKKDDG). Residues 1017-1294 (RDYNPYNYSD…DPTTDVSGQS (278 aa)) form a required for cortical localization region. HEAT repeat units lie at residues 1054–1091 (LDHS…TQEE), 1098–1135 (EHFK…HQPA), and 1216–1253 (LLLP…VIGD).

The protein belongs to the CLASP family. In terms of assembly, interacts with microtubules. Interacts with MAPRE1; probably required for targeting to the growing microtubule plus ends. Interacts with CLIP2, ERC1, MAPRE3, PHLDB2 and RSN. The interaction with ERC1 may be mediated by PHLDB2. Interacts with GCC2; recruits CLASP2 to Golgi membranes. Interacts with MACF1. Interacts with mtcl2 and MTCL1. Phosphorylated by GSK3B. Phosphorylation reduces MAPRE1 binding. Phosphorylation by GSK3B may negatively regulate binding to microtubule lattices in lamella. In terms of tissue distribution, brain-specific.

The protein resides in the cytoplasm. It is found in the cytoskeleton. The protein localises to the microtubule organizing center. Its subcellular location is the centrosome. It localises to the chromosome. The protein resides in the centromere. It is found in the kinetochore. The protein localises to the spindle. Its subcellular location is the golgi apparatus. It localises to the trans-Golgi network. The protein resides in the cell membrane. It is found in the cell projection. The protein localises to the ruffle membrane. Its subcellular location is the cell cortex. In terms of biological role, microtubule plus-end tracking protein that promotes the stabilization of dynamic microtubules. Involved in the nucleation of noncentrosomal microtubules originating from the trans-Golgi network (TGN). Required for the polarization of the cytoplasmic microtubule arrays in migrating cells towards the leading edge of the cell. May act at the cell cortex to enhance the frequency of rescue of depolymerizing microtubules by attaching their plus-ends to cortical platforms composed of ERC1 and PHLDB2. This cortical microtubule stabilizing activity is regulated at least in part by phosphatidylinositol 3-kinase signaling. Also performs a similar stabilizing function at the kinetochore which is essential for the bipolar alignment of chromosomes on the mitotic spindle. Acts as a mediator of ERBB2-dependent stabilization of microtubules at the cell cortex. The protein is CLIP-associating protein 2 (CLASP2) of Homo sapiens (Human).